Consider the following 203-residue polypeptide: Ribonuclease HII (203 aa).

Residues 16-203 (ENIACCDEVG…HRKSFLNKIL (188 aa)) form the RNase H type-2 domain. 3 residues coordinate a divalent metal cation: Asp22, Glu23, and Asp120.

This sequence belongs to the RNase HII family. Requires Mn(2+) as cofactor. The cofactor is Mg(2+).

It localises to the cytoplasm. The catalysed reaction is Endonucleolytic cleavage to 5'-phosphomonoester.. In terms of biological role, endonuclease that specifically degrades the RNA of RNA-DNA hybrids. The protein is Ribonuclease HII of Alkaliphilus oremlandii (strain OhILAs) (Clostridium oremlandii (strain OhILAs)).